Consider the following 249-residue polypeptide: DNA polymerase sliding clamp (249 aa).

The protein belongs to the PCNA family. Homotrimer. The subunits circularize to form a toroid; DNA passes through its center. Replication factor C (RFC) is required to load the toroid on the DNA.

Functionally, sliding clamp subunit that acts as a moving platform for DNA processing. Responsible for tethering the catalytic subunit of DNA polymerase and other proteins to DNA during high-speed replication. In Pyrococcus horikoshii (strain ATCC 700860 / DSM 12428 / JCM 9974 / NBRC 100139 / OT-3), this protein is DNA polymerase sliding clamp.